The sequence spans 342 residues: Ribosomal RNA small subunit methyltransferase H (342 aa).

Residues 36–38 (GGH), D56, F82, D100, and Q107 each bind S-adenosyl-L-methionine. Residues 309–342 (ENRESGMGKGHGAAASRFPTPDSRFPTSPNGDAP) form a disordered region. Residues 333–342 (FPTSPNGDAP) show a composition bias toward polar residues.

The protein belongs to the methyltransferase superfamily. RsmH family.

The protein localises to the cytoplasm. The catalysed reaction is cytidine(1402) in 16S rRNA + S-adenosyl-L-methionine = N(4)-methylcytidine(1402) in 16S rRNA + S-adenosyl-L-homocysteine + H(+). In terms of biological role, specifically methylates the N4 position of cytidine in position 1402 (C1402) of 16S rRNA. This is Ribosomal RNA small subunit methyltransferase H from Xanthomonas campestris pv. campestris (strain B100).